A 336-amino-acid chain; its full sequence is Potassium channel subfamily K member 1 (336 aa).

The Cytoplasmic segment spans residues methionine 1–alanine 20. A helical membrane pass occupies residues tryptophan 21–phenylalanine 41. At serine 42–aspartate 103 the chain is on the extracellular side. Asparagine 95 carries an N-linked (GlcNAc...) asparagine glycan. The helical intramembrane region spans phenylalanine 104 to serine 116. An intramembrane segment occupies threonine 117–histidine 122. Residues threonine 117–histidine 122 form a selectivity filter 1 region. At threonine 123–alanine 132 the chain is on the extracellular side. Residues phenylalanine 133–valine 156 form a helical membrane-spanning segment. The Cytoplasmic segment spans residues threonine 157 to isoleucine 181. Residues valine 182 to valine 202 form a helical membrane-spanning segment. Topologically, residues phenylalanine 203–asparagine 211 are extracellular. The helical intramembrane region spans phenylalanine 212–serine 224. Residues threonine 225–aspartate 230 form a selectivity filter 2 region. An intramembrane segment occupies threonine 225 to tyrosine 231. The Extracellular portion of the chain corresponds to valine 232 to glutamate 243. The helical transmembrane segment at leucine 244–phenylalanine 267 threads the bilayer. Residues cysteine 268–histidine 336 lie on the Cytoplasmic side of the membrane. A Glycyl lysine isopeptide (Lys-Gly) (interchain with G-Cter in SUMO) cross-link involves residue lysine 274. The interval isoleucine 293–leucine 299 is important for intracellular retention in recycling endosomes. The segment at glycine 310–histidine 336 is disordered. Serine 326 is subject to Phosphoserine.

This sequence belongs to the two pore domain potassium channel (TC 1.A.1.8) family. Homodimer; disulfide-linked. Heterodimer with KCNK2; disulfide-linked. In astrocytes, forms mostly heterodimeric potassium channels with KCNK2, with only a minor proportion of functional channels containing homodimeric KCNK1. Interacts with KCNK3 and KCNK9, forming functional heterodimeric channels. Interacts with GNG4. Identified in a complex with PSD and ARF6; interacts only with PSD that is bound to ARF6. Interacts with UBE2I. In terms of processing, sumoylation is controversial. Sumoylated by UBE2I. Not sumoylated when expressed in xenopus oocytes or mammalian cells. Sumoylation inactivates the channel, but does not interfere with expression at the cell membrane. Sumoylation of a single subunit is sufficient to silence the dimeric channel. Sumoylation of KCNK1 is sufficient to silence heterodimeric channels formed by KCNK1 and KCNK3 or KCNK9. Desumoylated by SENP1; this activates the channel. Desumoylated by SENP1; this strongly increases halothane-mediated activation of heterodimeric channels formed with KCNK9. SENP1 treatment has no effect. Detected in spiral ganglion neurons. Detected in hippocampus CA1 and CA1 regions and in the molecular layer of the dentate gyrus. Detected on hippocampus astrocytes. Highly expressed in the stria vascularis in the cochlea. Detected in pancreas islet beta cells. Detected in kidney, at brush border membranes in proximal tubules and in cytoplasmic structures in distal convoluted tubules, thick ascending limbs and collecting ducts (at protein level). Widely expressed. Detected in spiral ganglion cells. Highest expression in brain, kidney, thyroid, salivary gland, adrenal gland, prostate, epididymis, uterus, placenta, colon and jejunum. Moderate expression in eyes, pituitary, pancreas, smooth muscle, testis and ovary. Very low levels in lung, aorta, liver, heart, skeletal muscle, thymus and spleen. In the brain, highest expression in cerebellar granule cells, brainstem, hippocampus and cerebral cortex.

Its subcellular location is the cell membrane. The protein resides in the recycling endosome. The protein localises to the apical cell membrane. It localises to the cytoplasmic vesicle. It is found in the perikaryon. Its subcellular location is the cell projection. The protein resides in the dendrite. The protein localises to the synaptic cell membrane. The enzyme catalyses K(+)(in) = K(+)(out). The catalysed reaction is NH4(+)(in) = NH4(+)(out). It catalyses the reaction Na(+)(in) = Na(+)(out). It carries out the reaction Rb(+)(in) = Rb(+)(out). The enzyme catalyses Cs(+)(in) = Cs(+)(out). The catalysed reaction is Li(+)(in) = Li(+)(out). It catalyses the reaction L-glutamate(out) = L-glutamate(in). It carries out the reaction chloride(in) = chloride(out). Its activity is regulated as follows. Inhibited by quinine, quinidine, barium, and internal acidification. In terms of biological role, ion channel that contributes to passive transmembrane potassium transport and to the regulation of the resting membrane potential in brain astrocytes, but also in kidney and in other tissues. Forms dimeric channels through which potassium ions pass in accordance with their electrochemical gradient. The channel is selective for K(+) ions at physiological potassium concentrations and at neutral pH, but becomes permeable to Na(+) at subphysiological K(+) levels and upon acidification of the extracellular medium. The homodimer has very low potassium channel activity, when expressed in heterologous systems, and can function as weakly inward rectifying potassium channel. Channel activity is modulated by activation of serotonin receptors. Heterodimeric channels containing KCNK1 and KCNK2 have much higher activity, and may represent the predominant form in astrocytes. Heterodimeric channels containing KCNK1 and KCNK3 or KCNK9 have much higher activity. Heterodimeric channels formed by KCNK1 and KCNK9 may contribute to halothane-sensitive currents. Mediates outward rectifying potassium currents in dentate gyrus granule cells and contributes to the regulation of their resting membrane potential. Contributes to the regulation of action potential firing in dentate gyrus granule cells and down-regulates their intrinsic excitability. In astrocytes, the heterodimer formed by KCNK1 and KCNK2 is required for rapid glutamate release in response to activation of G-protein coupled receptors, such as F2R and CNR1. Required for normal ion and water transport in the kidney. Contributes to the regulation of the resting membrane potential of pancreatic beta cells. The low channel activity of homodimeric KCNK1 may be due to sumoylation. The low channel activity may be due to rapid internalization from the cell membrane and retention in recycling endosomes. Permeable to monovalent cations with ion selectivity for K(+) &gt; Rb(+) &gt;&gt; NH4(+) &gt;&gt; Cs(+) = Na(+) = Li(+). This is Potassium channel subfamily K member 1 (Kcnk1) from Mus musculus (Mouse).